A 200-amino-acid polypeptide reads, in one-letter code: NADH-ubiquinone oxidoreductase 21.3 kDa subunit (200 aa).

The next 3 helical transmembrane spans lie at 16–36 (IKSG…MASL), 48–68 (MHVF…GGIY), and 105–125 (FPVI…FAFS).

Complex I is composed of about 40 different subunits.

The protein localises to the mitochondrion inner membrane. It carries out the reaction a ubiquinone + NADH + 5 H(+)(in) = a ubiquinol + NAD(+) + 4 H(+)(out). Functionally, transfer of electrons from NADH to the respiratory chain. The immediate electron acceptor for the enzyme is believed to be ubiquinone. In Neurospora crassa (strain ATCC 24698 / 74-OR23-1A / CBS 708.71 / DSM 1257 / FGSC 987), this protein is NADH-ubiquinone oxidoreductase 21.3 kDa subunit.